The chain runs to 363 residues: DNA replication and repair protein RecF (363 aa).

ATP is bound at residue 30 to 37; that stretch reads GSNGSGKT.

The protein belongs to the RecF family.

It localises to the cytoplasm. The RecF protein is involved in DNA metabolism; it is required for DNA replication and normal SOS inducibility. RecF binds preferentially to single-stranded, linear DNA. It also seems to bind ATP. The protein is DNA replication and repair protein RecF of Photorhabdus laumondii subsp. laumondii (strain DSM 15139 / CIP 105565 / TT01) (Photorhabdus luminescens subsp. laumondii).